The primary structure comprises 454 residues: uncharacterized protein (454 aa).

The tract at residues 1–25 (MHGPTSKAISRNVRSVKRPRRAPRP) is disordered. A compositionally biased stretch (basic residues) spans 14 to 23 (RSVKRPRRAP).

The protein resides in the cytoplasm. The protein localises to the nucleus. This is an uncharacterized protein from Saccharomyces cerevisiae (strain ATCC 204508 / S288c) (Baker's yeast).